A 190-amino-acid chain; its full sequence is Elongation factor P (190 aa).

Belongs to the elongation factor P family.

It is found in the cytoplasm. The protein operates within protein biosynthesis; polypeptide chain elongation. In terms of biological role, involved in peptide bond synthesis. Stimulates efficient translation and peptide-bond synthesis on native or reconstituted 70S ribosomes in vitro. Probably functions indirectly by altering the affinity of the ribosome for aminoacyl-tRNA, thus increasing their reactivity as acceptors for peptidyl transferase. The protein is Elongation factor P of Hyphomonas neptunium (strain ATCC 15444).